Consider the following 545-residue polypeptide: ATP synthase subunit alpha, mitochondrial (545 aa).

A mitochondrion-targeting transit peptide spans 1–35; that stretch reads MLARTAAIRSLSRTLINSTKAARPAAAALASTRRL. Phosphoserine occurs at positions 57 and 178. An ATP-binding site is contributed by 206–213; that stretch reads GDRQTGKT.

This sequence belongs to the ATPase alpha/beta chains family. F-type ATPases have 2 components, CF(1) - the catalytic core - and CF(0) - the membrane proton channel. CF(1) has five subunits: alpha(3), beta(3), gamma(1), delta(1), epsilon(1). CF(0) has three main subunits: a, b and c.

The protein localises to the mitochondrion inner membrane. Mitochondrial membrane ATP synthase (F(1)F(0) ATP synthase or Complex V) produces ATP from ADP in the presence of a proton gradient across the membrane which is generated by electron transport complexes of the respiratory chain. F-type ATPases consist of two structural domains, F(1) - containing the extramembraneous catalytic core, and F(0) - containing the membrane proton channel, linked together by a central stalk and a peripheral stalk. During catalysis, ATP synthesis in the catalytic domain of F(1) is coupled via a rotary mechanism of the central stalk subunits to proton translocation. Subunits alpha and beta form the catalytic core in F(1). Rotation of the central stalk against the surrounding alpha(3)beta(3) subunits leads to hydrolysis of ATP in three separate catalytic sites on the beta subunits. Subunit alpha does not bear the catalytic high-affinity ATP-binding sites. The protein is ATP synthase subunit alpha, mitochondrial (ATP1) of Saccharomyces cerevisiae (strain ATCC 204508 / S288c) (Baker's yeast).